The sequence spans 106 residues: MNDSEFHRLADQLWLTIEERLDDWDGDSDIDCEINGGVLTITFENGSKIIINRQEPLHQVWLATKQGGYHFDLKGDEWICDRSGETFRDLLEQAATQQAGETVSFR.

The protein belongs to the frataxin family. As to quaternary structure, interacts with IscS. Certain pairs of proteins can bind simultaneously to IscS; IscS-IscU-CyaY complexes can be isolated in vitro, but (IscS-TusA-CyaY) complexes cannot.

Its function is as follows. Involved in iron-sulfur (Fe-S) cluster assembly. May act as a regulator of Fe-S biogenesis. This is Iron-sulfur cluster assembly protein CyaY from Escherichia coli O157:H7.